The sequence spans 475 residues: ATP synthase subunit beta (475 aa).

155 to 162 lines the ATP pocket; sequence GGAGVGKT.

The protein belongs to the ATPase alpha/beta chains family. As to quaternary structure, F-type ATPases have 2 components, CF(1) - the catalytic core - and CF(0) - the membrane proton channel. CF(1) has five subunits: alpha(3), beta(3), gamma(1), delta(1), epsilon(1). CF(0) has three main subunits: a(1), b(2) and c(9-12). The alpha and beta chains form an alternating ring which encloses part of the gamma chain. CF(1) is attached to CF(0) by a central stalk formed by the gamma and epsilon chains, while a peripheral stalk is formed by the delta and b chains.

Its subcellular location is the cell inner membrane. The enzyme catalyses ATP + H2O + 4 H(+)(in) = ADP + phosphate + 5 H(+)(out). Its function is as follows. Produces ATP from ADP in the presence of a proton gradient across the membrane. The catalytic sites are hosted primarily by the beta subunits. The chain is ATP synthase subunit beta from Rhizobium etli (strain CIAT 652).